The sequence spans 640 residues: DNA mismatch repair protein MutL (640 aa).

The disordered stretch occupies residues 343-389 (TKNTATDQRAENLEVKPDSKEKELQPKESQHPRLVACDLPSGKIMPP). The segment covering 350 to 373 (QRAENLEVKPDSKEKELQPKESQH) has biased composition (basic and acidic residues).

Belongs to the DNA mismatch repair MutL/HexB family.

Functionally, this protein is involved in the repair of mismatches in DNA. It is required for dam-dependent methyl-directed DNA mismatch repair. May act as a 'molecular matchmaker', a protein that promotes the formation of a stable complex between two or more DNA-binding proteins in an ATP-dependent manner without itself being part of a final effector complex. The chain is DNA mismatch repair protein MutL from Desulforamulus reducens (strain ATCC BAA-1160 / DSM 100696 / MI-1) (Desulfotomaculum reducens).